Consider the following 98-residue polypeptide: HIG1 domain family member 1B (98 aa).

Residues 1–28 (MSANKGWWVPPEGEDNLSKKFLRKTRES) are Cytoplasmic-facing. An HIG1 domain is found at 1–94 (MSANKGWWVP…YRDYIKRVSE (94 aa)). The chain crosses the membrane as a helical span at residues 29–46 (PLVPIGVAGCLVIAAYRI). Residues 47 to 60 (YRLKARGSTKLSIH) lie on the Extracellular side of the membrane. A helical membrane pass occupies residues 61 to 83 (LIHTRVAAQACAVGAIMLGAMYT). The Cytoplasmic segment spans residues 84 to 98 (MYRDYIKRVSEDAEK).

The protein localises to the membrane. The sequence is that of HIG1 domain family member 1B (Higd1b) from Mus musculus (Mouse).